The primary structure comprises 67 residues: Conotoxin TxMMSK-01 (67 aa).

The N-terminal stretch at 1–20 (MMSKLGVLLITCLLLFPLTA) is a signal peptide. Residues 21–53 (VPLDGDQPADQPAERLQDDISSENHPFFDPVKR) constitute a propeptide that is removed on maturation. Disulfide bonds link C54–C66, C55–C62, and C59–C65. P64 is subject to 4-hydroxyproline. C66 carries the cysteine amide modification.

The protein belongs to the conotoxin M superfamily. As to expression, expressed by the venom duct.

It localises to the secreted. This chain is Conotoxin TxMMSK-01, found in Conus textile (Cloth-of-gold cone).